We begin with the raw amino-acid sequence, 376 residues long: Queuine tRNA-ribosyltransferase (376 aa).

Residue Asp-93 is the Proton acceptor of the active site. Substrate-binding positions include 93 to 97 (DSGGF), Asp-147, Gln-190, and Gly-217. The interval 248-254 (GVGTPDD) is RNA binding. Asp-267 acts as the Nucleophile in catalysis. The RNA binding; important for wobble base 34 recognition stretch occupies residues 272–276 (TRSGR).

Belongs to the queuine tRNA-ribosyltransferase family. Homodimer. Within each dimer, one monomer is responsible for RNA recognition and catalysis, while the other monomer binds to the replacement base PreQ1.

It carries out the reaction 7-aminomethyl-7-carbaguanine + guanosine(34) in tRNA = 7-aminomethyl-7-carbaguanosine(34) in tRNA + guanine. The protein operates within tRNA modification; tRNA-queuosine biosynthesis. Its function is as follows. Catalyzes the base-exchange of a guanine (G) residue with the queuine precursor 7-aminomethyl-7-deazaguanine (PreQ1) at position 34 (anticodon wobble position) in tRNAs with GU(N) anticodons (tRNA-Asp, -Asn, -His and -Tyr). Catalysis occurs through a double-displacement mechanism. The nucleophile active site attacks the C1' of nucleotide 34 to detach the guanine base from the RNA, forming a covalent enzyme-RNA intermediate. The proton acceptor active site deprotonates the incoming PreQ1, allowing a nucleophilic attack on the C1' of the ribose to form the product. After dissociation, two additional enzymatic reactions on the tRNA convert PreQ1 to queuine (Q), resulting in the hypermodified nucleoside queuosine (7-(((4,5-cis-dihydroxy-2-cyclopenten-1-yl)amino)methyl)-7-deazaguanosine). The polypeptide is Queuine tRNA-ribosyltransferase (Rhizobium meliloti (strain 1021) (Ensifer meliloti)).